The chain runs to 514 residues: 1-pyrroline-5-carboxylate dehydrogenase (514 aa).

Active-site residues include Glu286 and Cys320.

Belongs to the aldehyde dehydrogenase family. RocA subfamily.

It carries out the reaction L-glutamate 5-semialdehyde + NAD(+) + H2O = L-glutamate + NADH + 2 H(+). Its pathway is amino-acid degradation; L-proline degradation into L-glutamate; L-glutamate from L-proline: step 2/2. This chain is 1-pyrroline-5-carboxylate dehydrogenase, found in Staphylococcus epidermidis (strain ATCC 12228 / FDA PCI 1200).